The primary structure comprises 155 residues: UPF0178 protein ACIAD2644 (155 aa).

The tract at residues 120 to 155 (GAGVQTGGPPPISERDKREFSSALDQTILKQKRKTA) is disordered.

This sequence belongs to the UPF0178 family.

The chain is UPF0178 protein ACIAD2644 from Acinetobacter baylyi (strain ATCC 33305 / BD413 / ADP1).